Consider the following 63-residue polypeptide: U2-agatoxin-Ao1v (63 aa).

An N-terminal signal peptide occupies residues 1–14 (LLLISAMVGSMIAA). A propeptide spanning residues 15–28 (VPEEESLQLSEDER) is cleaved from the precursor. 3 disulfides stabilise this stretch: cysteine 31–cysteine 47, cysteine 38–cysteine 52, and cysteine 46–cysteine 62.

The protein belongs to the neurotoxin 01 (U2-agtx) family. Expressed by the venom gland.

It localises to the secreted. In terms of biological role, insect active toxin causing rapid but reversible paralysis in crickets. No activity shown in mammals. Does not show effect on mammalian voltage-gated calcium channels. In Agelena orientalis (Funnel-web spider), this protein is U2-agatoxin-Ao1v.